We begin with the raw amino-acid sequence, 95 residues long: Histone-like DNA-binding protein (95 aa).

It belongs to the bacterial histone-like protein family.

In Rickettsia typhi (strain ATCC VR-144 / Wilmington), this protein is Histone-like DNA-binding protein.